Here is a 357-residue protein sequence, read N- to C-terminus: Chorismate synthase (357 aa).

Residues 38 to 49 (EKDIQPDLDRRK) are compositionally biased toward basic and acidic residues. The tract at residues 38–60 (EKDIQPDLDRRKPGTSRYTTPRR) is disordered. Residues R48 and R54 each contribute to the NADP(+) site. Residues 125–127 (RSS), 243–244 (NA), G283, 298–302 (KPTSS), and R324 contribute to the FMN site.

This sequence belongs to the chorismate synthase family. Homotetramer. FMNH2 is required as a cofactor.

The enzyme catalyses 5-O-(1-carboxyvinyl)-3-phosphoshikimate = chorismate + phosphate. It functions in the pathway metabolic intermediate biosynthesis; chorismate biosynthesis; chorismate from D-erythrose 4-phosphate and phosphoenolpyruvate: step 7/7. Catalyzes the anti-1,4-elimination of the C-3 phosphate and the C-6 proR hydrogen from 5-enolpyruvylshikimate-3-phosphate (EPSP) to yield chorismate, which is the branch point compound that serves as the starting substrate for the three terminal pathways of aromatic amino acid biosynthesis. This reaction introduces a second double bond into the aromatic ring system. This Haemophilus influenzae (strain PittEE) protein is Chorismate synthase.